The following is a 342-amino-acid chain: Probable long-chain-alcohol O-fatty-acyltransferase 3 (342 aa).

Helical transmembrane passes span 9 to 29 (IKLW…STGI), 36 to 56 (LLSV…FSYV), 58 to 78 (FSGC…ILFS), 115 to 135 (IPIW…QMYE), 153 to 173 (IFLE…ITLG), 227 to 247 (MFLG…MLFF), 255 to 275 (TGEV…EVAV), and 297 to 317 (VGFV…SGII).

This sequence belongs to the wax synthase family.

Its subcellular location is the membrane. It catalyses the reaction a long chain fatty alcohol + a fatty acyl-CoA = a wax ester + CoA. Functionally, catalyzes the final step in the synthesis of long-chain linear esters (waxes). In Arabidopsis thaliana (Mouse-ear cress), this protein is Probable long-chain-alcohol O-fatty-acyltransferase 3 (AT3).